The sequence spans 892 residues: Transmembrane channel-like protein 2-B (892 aa).

The segment at 29 to 125 (GINQNLRREE…DESMSEGEMA (97 aa)) is disordered. Composition is skewed to basic residues over residues 48 to 58 (RRAKKRRMNRR) and 66 to 77 (RSKKMRMRVRKN). Positions 103–112 (PSSCSSSSDN) are enriched in low complexity. A run of 9 helical transmembrane segments spans residues 235 to 255 (LVLF…MGIP), 275 to 295 (FSVL…YGFY), 308 to 328 (LPLS…MVVI), 403 to 423 (LANV…YAVV), 444 to 464 (EVEI…EAIA), 482 to 502 (IFAL…DEVN), 616 to 636 (LIFN…LVGI), 671 to 691 (FYMG…IYSI), and 736 to 756 (GLII…LNAV). Basic and acidic residues predominate over residues 772-785 (QMQRDEEKNRRNNK). Disordered regions lie at residues 772 to 791 (QMQR…TNQV) and 796 to 892 (EDLL…PPRR). Positions 862–878 (PRQPGPLPGNPRGPPPG) are enriched in pro residues.

It belongs to the TMC family. In adults, expression is restricted to the hair cells of inner ear and lateral line organ. Expressed at higher levels in the larval lateral-line neuromasts than in the larval inner ear.

It localises to the membrane. Its function is as follows. Probable component of the mechanotransducer (MET) non-selective cation channel. This is Transmembrane channel-like protein 2-B from Danio rerio (Zebrafish).